We begin with the raw amino-acid sequence, 348 residues long: Probable dual-specificity RNA methyltransferase RlmN (348 aa).

Glu89 (proton acceptor) is an active-site residue. Residues 95–328 enclose the Radical SAM core domain; that stretch reads HKNRNTVCVS…VTLRISYGSR (234 aa). Cysteines 102 and 333 form a disulfide. Residues Cys109, Cys113, and Cys116 each coordinate [4Fe-4S] cluster. Residues 159 to 160, Ser191, 214 to 216, and Asn290 each bind S-adenosyl-L-methionine; these read GE and SLH. Cys333 acts as the S-methylcysteine intermediate in catalysis.

This sequence belongs to the radical SAM superfamily. RlmN family. [4Fe-4S] cluster serves as cofactor.

The protein resides in the cytoplasm. The catalysed reaction is adenosine(2503) in 23S rRNA + 2 reduced [2Fe-2S]-[ferredoxin] + 2 S-adenosyl-L-methionine = 2-methyladenosine(2503) in 23S rRNA + 5'-deoxyadenosine + L-methionine + 2 oxidized [2Fe-2S]-[ferredoxin] + S-adenosyl-L-homocysteine. The enzyme catalyses adenosine(37) in tRNA + 2 reduced [2Fe-2S]-[ferredoxin] + 2 S-adenosyl-L-methionine = 2-methyladenosine(37) in tRNA + 5'-deoxyadenosine + L-methionine + 2 oxidized [2Fe-2S]-[ferredoxin] + S-adenosyl-L-homocysteine. Its function is as follows. Specifically methylates position 2 of adenine 2503 in 23S rRNA and position 2 of adenine 37 in tRNAs. The chain is Probable dual-specificity RNA methyltransferase RlmN from Dictyoglomus thermophilum (strain ATCC 35947 / DSM 3960 / H-6-12).